The chain runs to 205 residues: ATP-dependent Clp protease proteolytic subunit (205 aa).

Serine 109 acts as the Nucleophile in catalysis. The active site involves histidine 134.

Belongs to the peptidase S14 family. In terms of assembly, fourteen ClpP subunits assemble into 2 heptameric rings which stack back to back to give a disk-like structure with a central cavity, resembling the structure of eukaryotic proteasomes.

Its subcellular location is the cytoplasm. The enzyme catalyses Hydrolysis of proteins to small peptides in the presence of ATP and magnesium. alpha-casein is the usual test substrate. In the absence of ATP, only oligopeptides shorter than five residues are hydrolyzed (such as succinyl-Leu-Tyr-|-NHMec, and Leu-Tyr-Leu-|-Tyr-Trp, in which cleavage of the -Tyr-|-Leu- and -Tyr-|-Trp bonds also occurs).. Functionally, cleaves peptides in various proteins in a process that requires ATP hydrolysis. Has a chymotrypsin-like activity. Plays a major role in the degradation of misfolded proteins. In Buchnera aphidicola subsp. Baizongia pistaciae (strain Bp), this protein is ATP-dependent Clp protease proteolytic subunit.